The following is a 75-amino-acid chain: Translational regulator CsrA (75 aa).

This sequence belongs to the CsrA/RsmA family. As to quaternary structure, homodimer; the beta-strands of each monomer intercalate to form a hydrophobic core, while the alpha-helices form wings that extend away from the core.

It localises to the cytoplasm. Its function is as follows. A translational regulator that binds mRNA to regulate translation initiation and/or mRNA stability. Usually binds in the 5'-UTR at or near the Shine-Dalgarno sequence preventing ribosome-binding, thus repressing translation. Its main target seems to be the major flagellin gene, while its function is anatagonized by FliW. This Treponema denticola (strain ATCC 35405 / DSM 14222 / CIP 103919 / JCM 8153 / KCTC 15104) protein is Translational regulator CsrA.